Reading from the N-terminus, the 312-residue chain is MTKSVTVKDLKERLNLELICSETGLERPILTSDLSRPGLELTGFFSYYPEDRVQLFGMTEISFSEGMEPEERLKRYKQMCTKRTPAFVISRNLEVPKELVAAAKEADIPVLRSRLKTTRLSVYITNYLESRLAPVISMHGVLVDIYGLGVLITGSSGVGKSETALELVKRGHRLVADDNVEIRQEDEMTLIGSSPAIIEHLLEIRGLGIINVMTLFGAGAVRSSKKITIVVHLENWDPDKHYDRVGLDQEKTKIFDMDIPKITVPVRPGRNLSVIIEVAAMNFRLKNMGYNAAEQFTQDLNNLIGHNSSMND.

Active-site residues include His139 and Lys160. Position 154-161 (154-161 (GSSGVGKS)) interacts with ATP. Residue Ser161 participates in Mg(2+) binding. The Proton acceptor; for phosphorylation activity. Proton donor; for dephosphorylation activity role is filled by Asp178. Positions 202–211 (LEIRGLGIIN) are important for the catalytic mechanism of both phosphorylation and dephosphorylation. Glu203 is a binding site for Mg(2+). Residue Arg244 is part of the active site. Residues 265 to 270 (PVRPGR) form an important for the catalytic mechanism of dephosphorylation region.

Belongs to the HPrK/P family. Homohexamer. Requires Mg(2+) as cofactor.

It catalyses the reaction [HPr protein]-L-serine + ATP = [HPr protein]-O-phospho-L-serine + ADP + H(+). It carries out the reaction [HPr protein]-O-phospho-L-serine + phosphate + H(+) = [HPr protein]-L-serine + diphosphate. Its function is as follows. Catalyzes the ATP- as well as the pyrophosphate-dependent phosphorylation of a specific serine residue in HPr, a phosphocarrier protein of the phosphoenolpyruvate-dependent sugar phosphotransferase system (PTS). HprK/P also catalyzes the pyrophosphate-producing, inorganic phosphate-dependent dephosphorylation (phosphorolysis) of seryl-phosphorylated HPr (P-Ser-HPr). The two antagonistic activities of HprK/P are regulated by several intracellular metabolites, which change their concentration in response to the absence or presence of rapidly metabolisable carbon sources (glucose, fructose, etc.) in the growth medium. Therefore, by controlling the phosphorylation state of HPr, HPrK/P is a sensor enzyme that plays a major role in the regulation of carbon metabolism and sugar transport: it mediates carbon catabolite repression (CCR), and regulates PTS-catalyzed carbohydrate uptake and inducer exclusion. This chain is HPr kinase/phosphorylase, found in Listeria innocua serovar 6a (strain ATCC BAA-680 / CLIP 11262).